The sequence spans 433 residues: KH domain-containing, RNA-binding, signal transduction-associated protein 1 (433 aa).

Positions 1-79 are disordered; sequence MQRRDDSSAR…PLLPGGAVKM (79 aa). Over residues 41–76 the composition is skewed to low complexity; sequence GAQHPQPLLTGGAAAGSSGAQGPAAANPAPLLPGGA. The segment at 82–243 is involved in homodimerization; that stretch reads ENKYLPELMA…VKKFLVPDMM (162 aa). A KH domain is found at 171–197; that stretch reads QEETGAKISVLGKGSMRDKAKEEELRK. Disordered regions lie at residues 259–305, 317–351, and 403–433; these read GVPE…ALVR, AAVA…PPPP, and QDDW…YGRY. Residues 277-300 show a composition bias toward pro residues; sequence APPPPPPVPRGRGVGPPPPPPPPR. The span at 329-342 shows a compositional bias: low complexity; that stretch reads VRGAPAPRARAAGI. Basic and acidic residues predominate over residues 424-433; it reads AYREHPYGRY.

Belongs to the KHDRBS family. As to quaternary structure, self-associates to form homooligomers when bound to RNA, oligomerization appears to be limited when binding to proteins. In terms of processing, tyrosine phosphorylated by several non-receptor tyrosine kinases including LCK, FYN and JAK3. Acetylated. Positively correlates with ability to bind RNA. Post-translationally, methylated by HRMT1L2. Required for nuclear localization.

The protein resides in the nucleus. Its subcellular location is the cytoplasm. It localises to the membrane. In terms of biological role, recruited and tyrosine phosphorylated by several receptor systems, for example the T-cell, leptin and insulin receptors. Once phosphorylated, functions as an adapter protein in signal transduction cascades by binding to SH2 and SH3 domain-containing proteins. Role in G2-M progression in the cell cycle. Represses CBP-dependent transcriptional activation apparently by competing with other nuclear factors for binding to CBP. Also acts as a putative regulator of mRNA stability and/or translation rates and mediates mRNA nuclear export. Plays a role in the regulation of alternative splicing and influences mRNA splice site selection and exon inclusion. The sequence is that of KH domain-containing, RNA-binding, signal transduction-associated protein 1 from Gallus gallus (Chicken).